Reading from the N-terminus, the 247-residue chain is Probable transcriptional regulatory protein YebC (247 aa).

The interval 1–20 is disordered; the sequence is MAGHSKWANTRHRKAAQDAK.

The protein belongs to the TACO1 family.

The protein resides in the cytoplasm. This is Probable transcriptional regulatory protein YebC from Salmonella arizonae (strain ATCC BAA-731 / CDC346-86 / RSK2980).